Here is a 315-residue protein sequence, read N- to C-terminus: Methionyl-tRNA formyltransferase (315 aa).

The N-terminal domain stretch occupies residues 2–189; sequence SDSLRIIFAG…LITTLKQLAD (188 aa). 113 to 116 is a binding site for (6S)-5,6,7,8-tetrahydrofolate; that stretch reads SLLP. Positions 210-315 are C-terminal domain; that stretch reads KEEARIDWSL…EWFIPGNRLA (106 aa).

This sequence belongs to the Fmt family.

The catalysed reaction is L-methionyl-tRNA(fMet) + (6R)-10-formyltetrahydrofolate = N-formyl-L-methionyl-tRNA(fMet) + (6S)-5,6,7,8-tetrahydrofolate + H(+). In terms of biological role, attaches a formyl group to the free amino group of methionyl-tRNA(fMet). The formyl group appears to play a dual role in the initiator identity of N-formylmethionyl-tRNA by promoting its recognition by IF2 and preventing the misappropriation of this tRNA by the elongation apparatus. This chain is Methionyl-tRNA formyltransferase, found in Salmonella typhi.